Consider the following 1394-residue polypeptide: Tubulin glycylase 3E (1394 aa).

Disordered stretches follow at residues 201–230 (KKKSNFQNKSQSQLNNHKNEEKKPSQQRKE), 563–582 (NQKDLQSNQTSSVISQQNSI), 620–663 (DENE…TSNF), and 682–706 (STVKNSDNNNQNQTNPQNQNTNLKE). The span at 205–216 (NFQNKSQSQLNN) shows a compositional bias: low complexity. Residues 217 to 230 (HKNEEKKPSQQRKE) show a composition bias toward basic and acidic residues. A compositionally biased stretch (low complexity) spans 568–582 (QSNQTSSVISQQNSI). A compositionally biased stretch (polar residues) spans 627-655 (KENVLQQKKNQSNQIVTSQQQSNNYFKQE). Residues 682–703 (STVKNSDNNNQNQTNPQNQNTN) are compositionally biased toward low complexity. A TTL domain is found at 911-1250 (RFIFNITVIA…QNNLQEDLEI (340 aa)). ATP is bound by residues 1058–1061 (QKYI), lysine 1079, and aspartate 1081. 2 IQ domains span residues 1320–1349 (QYWGAIKIQSKIRSFLAKKKLQRLKNQKFT) and 1348–1377 (FTFAAIKIQQKMRQFLAKKQLNILKKQQQT).

The protein resides in the cell projection. It localises to the cilium. It is found in the cytoplasm. The protein localises to the cytoskeleton. Its subcellular location is the cilium axoneme. Its function is as follows. Probable glycylase which modifies tubulin, generating side chains of glycine on the gamma-carboxyl groups of specific glutamate residues within the C-terminal tail of tubulin. The sequence is that of Tubulin glycylase 3E (TTLL3E) from Tetrahymena thermophila (strain SB210).